The sequence spans 843 residues: Protein P (843 aa).

Residues 1-177 (MPLSYQHFRK…FCGSPYSWEQ (177 aa)) are terminal protein domain (TP). Positions 178–346 (DLQHGRLVFQ…YCLCHIVNLI (169 aa)) are spacer. The interval 220–265 (QSRLGPQPAQGQLAGRQQGGSGSIRARVHPSPWGTVGVEPSGSGPT) is disordered. The segment covering 223–235 (LGPQPAQGQLAGR) has biased composition (low complexity). The polymerase/reverse transcriptase domain (RT) stretch occupies residues 347–690 (EDWGPCTEHG…YLNLYPVARQ (344 aa)). The region spanning 357-600 (EHLIRTPRTP…YSLNFMGYVI (244 aa)) is the Reverse transcriptase domain. Mg(2+) is bound by residues aspartate 429, aspartate 551, and aspartate 552.

This sequence belongs to the hepadnaviridae P protein family.

The catalysed reaction is DNA(n) + a 2'-deoxyribonucleoside 5'-triphosphate = DNA(n+1) + diphosphate. It catalyses the reaction Endonucleolytic cleavage to 5'-phosphomonoester.. With respect to regulation, activated by host HSP70 and HSP40 in vitro to be able to bind the epsilon loop of the pgRNA. Because deletion of the RNase H region renders the protein partly chaperone-independent, the chaperones may be needed indirectly to relieve occlusion of the RNA-binding site by this domain. Inhibited by several reverse-transcriptase inhibitors: Lamivudine, Adefovir and Entecavir. In terms of biological role, multifunctional enzyme that converts the viral RNA genome into dsDNA in viral cytoplasmic capsids. This enzyme displays a DNA polymerase activity that can copy either DNA or RNA templates, and a ribonuclease H (RNase H) activity that cleaves the RNA strand of RNA-DNA heteroduplexes in a partially processive 3'- to 5'-endonucleasic mode. Neo-synthesized pregenomic RNA (pgRNA) are encapsidated together with the P protein, and reverse-transcribed inside the nucleocapsid. Initiation of reverse-transcription occurs first by binding the epsilon loop on the pgRNA genome, and is initiated by protein priming, thereby the 5'-end of (-)DNA is covalently linked to P protein. Partial (+)DNA is synthesized from the (-)DNA template and generates the relaxed circular DNA (RC-DNA) genome. After budding and infection, the RC-DNA migrates in the nucleus, and is converted into a plasmid-like covalently closed circular DNA (cccDNA). The activity of P protein does not seem to be necessary for cccDNA generation, and is presumably released from (+)DNA by host nuclear DNA repair machinery. This is Protein P from Hepatitis B virus genotype B2 (isolate Vietnam/9873/1997) (HBV-B).